The primary structure comprises 279 residues: 4-hydroxy-3-methylbut-2-enyl diphosphate reductase (279 aa).

Cys12 is a binding site for [4Fe-4S] cluster. (2E)-4-hydroxy-3-methylbut-2-enyl diphosphate-binding residues include His40 and His70. Dimethylallyl diphosphate-binding residues include His40 and His70. Positions 40 and 70 each coordinate isopentenyl diphosphate. Cys92 lines the [4Fe-4S] cluster pocket. Residue His119 coordinates (2E)-4-hydroxy-3-methylbut-2-enyl diphosphate. A dimethylallyl diphosphate-binding site is contributed by His119. An isopentenyl diphosphate-binding site is contributed by His119. The active-site Proton donor is Glu121. Residue Thr151 participates in (2E)-4-hydroxy-3-methylbut-2-enyl diphosphate binding. Cys181 serves as a coordination point for [4Fe-4S] cluster. (2E)-4-hydroxy-3-methylbut-2-enyl diphosphate is bound by residues Ser209, Ser210, Asn211, and Ser251. Ser209, Ser210, Asn211, and Ser251 together coordinate dimethylallyl diphosphate. Positions 209, 210, 211, and 251 each coordinate isopentenyl diphosphate.

It belongs to the IspH family. [4Fe-4S] cluster is required as a cofactor.

The catalysed reaction is isopentenyl diphosphate + 2 oxidized [2Fe-2S]-[ferredoxin] + H2O = (2E)-4-hydroxy-3-methylbut-2-enyl diphosphate + 2 reduced [2Fe-2S]-[ferredoxin] + 2 H(+). It carries out the reaction dimethylallyl diphosphate + 2 oxidized [2Fe-2S]-[ferredoxin] + H2O = (2E)-4-hydroxy-3-methylbut-2-enyl diphosphate + 2 reduced [2Fe-2S]-[ferredoxin] + 2 H(+). It functions in the pathway isoprenoid biosynthesis; dimethylallyl diphosphate biosynthesis; dimethylallyl diphosphate from (2E)-4-hydroxy-3-methylbutenyl diphosphate: step 1/1. The protein operates within isoprenoid biosynthesis; isopentenyl diphosphate biosynthesis via DXP pathway; isopentenyl diphosphate from 1-deoxy-D-xylulose 5-phosphate: step 6/6. Its function is as follows. Catalyzes the conversion of 1-hydroxy-2-methyl-2-(E)-butenyl 4-diphosphate (HMBPP) into a mixture of isopentenyl diphosphate (IPP) and dimethylallyl diphosphate (DMAPP). Acts in the terminal step of the DOXP/MEP pathway for isoprenoid precursor biosynthesis. This Thermotoga neapolitana (strain ATCC 49049 / DSM 4359 / NBRC 107923 / NS-E) protein is 4-hydroxy-3-methylbut-2-enyl diphosphate reductase.